A 649-amino-acid chain; its full sequence is Mediator of RNA polymerase II transcription subunit 17 (649 aa).

The segment at glutamine 51–aspartate 79 is disordered.

The protein belongs to the Mediator complex subunit 17 family. Component of the Mediator complex, which is composed of MED1, MED4, MED6, MED7, MED8, MED9, MED10, MED11, MED12, MED13, MED13L, MED14, MED15, MED16, MED17, MED18, MED19, MED20, MED21, MED22, MED23, MED24, MED25, MED26, MED27, MED29, MED30, MED31, CCNC, CDK8 and CDC2L6/CDK11. The MED12, MED13, CCNC and CDK8 subunits form a distinct module termed the CDK8 module. Mediator containing the CDK8 module is less active than Mediator lacking this module in supporting transcriptional activation. Individual preparations of the Mediator complex lacking one or more distinct subunits have been variously termed ARC, CRSP, DRIP, PC2, SMCC and TRAP. Interacts with STAT2. Interacts with GATA1 and PPARG.

It localises to the nucleus. Functionally, component of the Mediator complex, a coactivator involved in the regulated transcription of nearly all RNA polymerase II-dependent genes. Mediator functions as a bridge to convey information from gene-specific regulatory proteins to the basal RNA polymerase II transcription machinery. Mediator is recruited to promoters by direct interactions with regulatory proteins and serves as a scaffold for the assembly of a functional preinitiation complex with RNA polymerase II and the general transcription factors. The protein is Mediator of RNA polymerase II transcription subunit 17 (Med17) of Mus musculus (Mouse).